Consider the following 555-residue polypeptide: Formate--tetrahydrofolate ligase (555 aa).

65–72 provides a ligand contact to ATP; it reads TPAGEGKS.

It belongs to the formate--tetrahydrofolate ligase family.

The catalysed reaction is (6S)-5,6,7,8-tetrahydrofolate + formate + ATP = (6R)-10-formyltetrahydrofolate + ADP + phosphate. Its pathway is one-carbon metabolism; tetrahydrofolate interconversion. The sequence is that of Formate--tetrahydrofolate ligase from Staphylococcus aureus (strain bovine RF122 / ET3-1).